Reading from the N-terminus, the 1155-residue chain is DNA-directed RNA polymerase subunit beta (1155 aa).

This sequence belongs to the RNA polymerase beta chain family. In terms of assembly, the RNAP catalytic core consists of 2 alpha, 1 beta, 1 beta' and 1 omega subunit. When a sigma factor is associated with the core the holoenzyme is formed, which can initiate transcription.

It carries out the reaction RNA(n) + a ribonucleoside 5'-triphosphate = RNA(n+1) + diphosphate. DNA-dependent RNA polymerase catalyzes the transcription of DNA into RNA using the four ribonucleoside triphosphates as substrates. The protein is DNA-directed RNA polymerase subunit beta of Borreliella afzelii (strain PKo) (Borrelia afzelii).